Here is a 631-residue protein sequence, read N- to C-terminus: Phosphomethylpyrimidine synthase (631 aa).

Residues Asn-239, Met-268, Tyr-297, His-333, Ser-353–Gly-355, Asp-394–Arg-397, and Glu-433 contribute to the substrate site. His-437 serves as a coordination point for Zn(2+). Tyr-460 contributes to the substrate binding site. His-501 lines the Zn(2+) pocket. [4Fe-4S] cluster-binding residues include Cys-581, Cys-584, and Cys-589.

This sequence belongs to the ThiC family. Homodimer. [4Fe-4S] cluster serves as cofactor.

The enzyme catalyses 5-amino-1-(5-phospho-beta-D-ribosyl)imidazole + S-adenosyl-L-methionine = 4-amino-2-methyl-5-(phosphooxymethyl)pyrimidine + CO + 5'-deoxyadenosine + formate + L-methionine + 3 H(+). It functions in the pathway cofactor biosynthesis; thiamine diphosphate biosynthesis. In terms of biological role, catalyzes the synthesis of the hydroxymethylpyrimidine phosphate (HMP-P) moiety of thiamine from aminoimidazole ribotide (AIR) in a radical S-adenosyl-L-methionine (SAM)-dependent reaction. The chain is Phosphomethylpyrimidine synthase from Citrobacter koseri (strain ATCC BAA-895 / CDC 4225-83 / SGSC4696).